The following is a 419-amino-acid chain: Subtilisin-like protease 2 (419 aa).

The N-terminal stretch at 1–16 is a signal peptide; sequence MQLLNFGLLLLPFVAG. Residues 17-122 constitute a propeptide that is removed on maturation; the sequence is DLAPQPEPLL…VHPDQHVYLA (106 aa). Residues 36-122 enclose the Inhibitor I9 domain; sequence QYIVTLKEGL…VHPDQHVYLA (87 aa). The Peptidase S8 domain maps to 131-419; sequence RWGLGYMSSK…IQERKFKLPK (289 aa). Catalysis depends on charge relay system residues aspartate 169 and histidine 201. N-linked (GlcNAc...) asparagine glycosylation is found at asparagine 248, asparagine 261, and asparagine 348. Catalysis depends on serine 357, which acts as the Charge relay system. N-linked (GlcNAc...) asparagine glycosylation occurs at asparagine 388.

Belongs to the peptidase S8 family.

It localises to the secreted. Its function is as follows. Secreted subtilisin-like serine protease with keratinolytic activity that contributes to pathogenicity. The chain is Subtilisin-like protease 2 (SUB2) from Trichophyton verrucosum (Cattle ringworm fungus).